The sequence spans 190 residues: CASP-like protein 1E2 (190 aa).

A disordered region spans residues 1 to 21 (MEHEGKNNMNGMEMEKGKREL). Residues 1–28 (MEHEGKNNMNGMEMEKGKRELGSRKGVE) are Cytoplasmic-facing. Residues 29–49 (LTMRVLALILTMAAATVLGVA) form a helical membrane-spanning segment. At 50–83 (KQTKVVSIKLIPTLPPLDITTTAKASYLSAFVYN) the chain is on the extracellular side. A helical membrane pass occupies residues 84–104 (ISVNAIACGYTAISIAILMIS). Over 105–111 (RGRRSKK) the chain is Cytoplasmic. A helical transmembrane segment spans residues 112 to 132 (LLMVVLLGDLVMVALLFSGTG). The Extracellular segment spans residues 133–163 (AASAIGLMGLHGNKHVMWKKVCGVFGKFCHR). The chain crosses the membrane as a helical span at residues 164-184 (AAPSLPLTLLAAVVFMFLVVL). At 185 to 190 (DAIKLP) the chain is on the cytoplasmic side.

It belongs to the Casparian strip membrane proteins (CASP) family. In terms of assembly, homodimer and heterodimers.

Its subcellular location is the cell membrane. In Arabidopsis thaliana (Mouse-ear cress), this protein is CASP-like protein 1E2.